The chain runs to 293 residues: RNA-binding Raly-like protein (293 aa).

The RRM domain maps to 21–92; sequence SRVFIGNLNT…QPLDINMAGE (72 aa). Disordered stretches follow at residues 159–195 and 245–293; these read PRAA…KLKS and QDEC…LQIK. The segment covering 176–192 has biased composition (low complexity); it reads KGGSRSAVSGSSSSGSK. Residues 192-254 adopt a coiled-coil conformation; it reads KLKSDELQTI…QDECVSENAD (63 aa). The span at 259 to 284 shows a compositional bias: acidic residues; the sequence is EPAEGAPDADGEELTDGVEEDFDEDG.

It belongs to the RRM HNRPC family. RALY subfamily.

The sequence is that of RNA-binding Raly-like protein (RALYL) from Bos taurus (Bovine).